The chain runs to 300 residues: Protoheme IX farnesyltransferase (300 aa).

8 helical membrane-spanning segments follow: residues 24–44, 46–66, 94–114, 118–138, 146–166, 172–192, 224–244, and 278–298; these read VTQLAVFCAVIGMFLATPGMV, WHVLIGGTIGIWLLAGAAFAI, PQILLFSAVLGSAGAWTLYTF, LTMWLTIATFVGYAVVYTLLL, IVIGGASGAMPPALGWAAVTG, AWILVLIIFVWTPPHFWVLAL, VILFAVTLMPFISGMSGVVYL, and IVYLSLLFAALLVDHYARPLL.

Belongs to the UbiA prenyltransferase family. Protoheme IX farnesyltransferase subfamily.

It localises to the cell inner membrane. The enzyme catalyses heme b + (2E,6E)-farnesyl diphosphate + H2O = Fe(II)-heme o + diphosphate. The protein operates within porphyrin-containing compound metabolism; heme O biosynthesis; heme O from protoheme: step 1/1. Converts heme B (protoheme IX) to heme O by substitution of the vinyl group on carbon 2 of heme B porphyrin ring with a hydroxyethyl farnesyl side group. The polypeptide is Protoheme IX farnesyltransferase (Burkholderia ambifaria (strain MC40-6)).